A 197-amino-acid chain; its full sequence is Probable inosine/xanthosine triphosphatase (197 aa).

9–14 (TSNPIK) provides a ligand contact to substrate. Residues aspartate 36 and aspartate 65 each contribute to the Mg(2+) site.

It belongs to the YjjX NTPase family. As to quaternary structure, homodimer. Mg(2+) serves as cofactor. Requires Mn(2+) as cofactor.

The enzyme catalyses XTP + H2O = XDP + phosphate + H(+). It carries out the reaction ITP + H2O = IDP + phosphate + H(+). Functionally, phosphatase that hydrolyzes non-canonical purine nucleotides such as XTP and ITP to their respective diphosphate derivatives. Probably excludes non-canonical purines from DNA/RNA precursor pool, thus preventing their incorporation into DNA/RNA and avoiding chromosomal lesions. The chain is Probable inosine/xanthosine triphosphatase from Aeropyrum pernix (strain ATCC 700893 / DSM 11879 / JCM 9820 / NBRC 100138 / K1).